A 125-amino-acid polypeptide reads, in one-letter code: SOSS complex subunit C homolog A (125 aa).

Polar residues predominate over residues 1-16 (MAFPNTSAQQAETNSK). Disordered stretches follow at residues 1-20 (MAFP…SLEE), 38-74 (SNTN…AAFN), and 105-125 (PATP…NNPK).

This sequence belongs to the SOSS-C family.

The protein is SOSS complex subunit C homolog A of Drosophila willistoni (Fruit fly).